The primary structure comprises 131 residues: Glycine cleavage system H protein (131 aa).

Positions 24–106 constitute a Lipoyl-binding domain; sequence TVRIGITDYA…YGEGWLVDLE (83 aa). The residue at position 65 (K65) is an N6-lipoyllysine.

It belongs to the GcvH family. As to quaternary structure, the glycine cleavage system is composed of four proteins: P, T, L and H. (R)-lipoate serves as cofactor.

In terms of biological role, the glycine cleavage system catalyzes the degradation of glycine. The H protein shuttles the methylamine group of glycine from the P protein to the T protein. This is Glycine cleavage system H protein from Mycobacteroides abscessus (strain ATCC 19977 / DSM 44196 / CCUG 20993 / CIP 104536 / JCM 13569 / NCTC 13031 / TMC 1543 / L948) (Mycobacterium abscessus).